A 477-amino-acid polypeptide reads, in one-letter code: Adenylyl cyclase-associated protein 2 (477 aa).

A2 carries the post-translational modification N-acetylalanine. Disordered regions lie at residues 224-262 and 274-324; these read SILSSGPGLPPPPPPPPPPGPPPPFENEGGKEEPSPSRS and ITKG…HAPV. Residues 231-248 show a composition bias toward pro residues; that stretch reads GLPPPPPPPPPPGPPPPF. Residues 300 to 318 show a composition bias toward low complexity; it reads RSPTKTRTPSPTSSKSNSP. Phosphoserine occurs at positions 301 and 309. The C-CAP/cofactor C-like domain maps to 318–455; the sequence is PQKHAPVLEL…QGDDYREFPI (138 aa).

Belongs to the CAP family. Found at relatively high levels in testes, at moderate levels in brain, heart and skeletal muscle, at lower levels in lung, skin, kidney and small intestine, and is undetectable in liver or spleen.

It is found in the cell membrane. Functionally, involved in the regulation of actin polymerization. The polypeptide is Adenylyl cyclase-associated protein 2 (Cap2) (Rattus norvegicus (Rat)).